The primary structure comprises 341 residues: Processive diacylglycerol beta-glycosyltransferase (341 aa).

The protein belongs to the glycosyltransferase 2 family. It depends on Mg(2+) as a cofactor.

Its subcellular location is the cell membrane. The catalysed reaction is a 1,2-diacyl-sn-glycerol + UDP-alpha-D-glucose = a 1,2-diacyl-3-O-(beta-D-glucopyranosyl)-sn-glycerol + UDP + H(+). It carries out the reaction a 1,2-diacyl-sn-glycerol + UDP-alpha-D-galactose = a 1,2-diacyl-3-O-(beta-D-galactosyl)-sn-glycerol + UDP + H(+). The enzyme catalyses a 1,2-diacyl-3-O-(beta-D-glucopyranosyl)-sn-glycerol + UDP-alpha-D-glucose = a 1,2-diacyl-3-O-(beta-D-Glc-(1-&gt;6)-beta-D-Glc)-sn-glycerol + UDP + H(+). It catalyses the reaction a 1,2-diacyl-3-O-(beta-D-galactosyl)-sn-glycerol + UDP-alpha-D-galactose = a 1,2-diacyl-3-O-[beta-D-galactosyl-(1-&gt;6)-beta-D-galactosyl]-sn-glycerol + UDP + H(+). It participates in glycolipid metabolism; diglucosyl-diacylglycerol biosynthesis. With respect to regulation, activated by the negatively charged lipid dioleoylphosphatidylglycerol (DOPG) and inhibited by N-(n-nonyl)deoxygalactonojirimycin (C9J). Functionally, processive glycosyltransferase involved in the biosynthesis of both the non-bilayer-prone beta-monoglycosyldiacylglycerol and the bilayer-forming membrane lipid beta-diglycosyldiacylglycerol. These components contribute to regulate the properties and stability of the membrane. Catalyzes sequentially the transfers of glucosyl or galactosyl residues from UDP-Glc or UDP-Gal to diacylglycerol (DAG) acceptor to form the corresponding beta-glycosyl-DAG (3-O-(beta-D-glycopyranosyl)-1,2-diacyl-sn-glycerol), which then acts as acceptor to give beta-diglycosyl-DAG product (3-O-(beta-D-glycopyranosyl-beta-(1-&gt;6)-D-glycopyranosyl)-1,2-diacyl-sn-glycerol). Dioleoylglycerol (DOG) is a preferred sugar acceptor than 3-O-(beta-D-glucopyranosyl)-1,2-dioleoyl-sn-glycerol. This chain is Processive diacylglycerol beta-glycosyltransferase, found in Mycoplasma genitalium (strain ATCC 33530 / DSM 19775 / NCTC 10195 / G37) (Mycoplasmoides genitalium).